A 65-amino-acid polypeptide reads, in one-letter code: Small ribosomal subunit protein bS21 (65 aa).

The interval 39–65 (EKPSIKRKKKAIAARKRALKKQRKMMD) is disordered. The segment covering 43-65 (IKRKKKAIAARKRALKKQRKMMD) has biased composition (basic residues).

It belongs to the bacterial ribosomal protein bS21 family.

This chain is Small ribosomal subunit protein bS21, found in Pelobacter propionicus (strain DSM 2379 / NBRC 103807 / OttBd1).